The sequence spans 147 residues: MNNILVINGPNLNLLGKREPDIYGNITLENINQKIKLHFKNEDLRIDFFQSNEEGKIIDRIIESEKKYNAIVINPAAYSHYSIAILDAMRSINIPVVEVHLSNIYKREEYRKKSVTAEASLGVISGFGYYGYIMAIEFILNNLSIGK.

Tyr-23 (proton acceptor) is an active-site residue. Substrate is bound by residues Asn-74, His-80, and Asp-87. The active-site Proton donor is the His-100. Substrate-binding positions include Leu-101 to Ser-102 and Arg-111.

It belongs to the type-II 3-dehydroquinase family. As to quaternary structure, homododecamer.

It carries out the reaction 3-dehydroquinate = 3-dehydroshikimate + H2O. It functions in the pathway metabolic intermediate biosynthesis; chorismate biosynthesis; chorismate from D-erythrose 4-phosphate and phosphoenolpyruvate: step 3/7. Functionally, catalyzes a trans-dehydration via an enolate intermediate. This Clostridium botulinum (strain Loch Maree / Type A3) protein is 3-dehydroquinate dehydratase.